We begin with the raw amino-acid sequence, 172 residues long: Male-specific submandibular salivary gland protein (172 aa).

A signal peptide spans 1 to 15 (MVKFLLLALALGVSC). Asn41 is a glycosylation site (N-linked (GlcNAc...) asparagine). 2 disulfides stabilise this stretch: Cys60/Cys64 and Cys79/Cys170.

It belongs to the calycin superfamily. Lipocalin family. N-glycosylated. Expressed in acinar cells of the submandibular salivary gland from where it is secreted into saliva (at protein level). Also released from the submandibular salivary gland into blood and excreted in urine (at protein level). Expressed in the lacrimal gland from where it is secreted into tears (at protein level).

The protein resides in the secreted. Its subcellular location is the cytoplasm. This Mesocricetus auratus (Golden hamster) protein is Male-specific submandibular salivary gland protein.